Reading from the N-terminus, the 502-residue chain is ATP synthase subunit alpha (502 aa).

Positions 115 to 136 (VDGLGPIHTTKTRPIESPAPGV) are disordered. 169 to 176 (GDRQTGKT) is a binding site for ATP.

Belongs to the ATPase alpha/beta chains family. As to quaternary structure, F-type ATPases have 2 components, CF(1) - the catalytic core - and CF(0) - the membrane proton channel. CF(1) has five subunits: alpha(3), beta(3), gamma(1), delta(1), epsilon(1). CF(0) has three main subunits: a(1), b(2) and c(9-12). The alpha and beta chains form an alternating ring which encloses part of the gamma chain. CF(1) is attached to CF(0) by a central stalk formed by the gamma and epsilon chains, while a peripheral stalk is formed by the delta and b chains.

It localises to the cell membrane. It catalyses the reaction ATP + H2O + 4 H(+)(in) = ADP + phosphate + 5 H(+)(out). In terms of biological role, produces ATP from ADP in the presence of a proton gradient across the membrane. The alpha chain is a regulatory subunit. The polypeptide is ATP synthase subunit alpha (Bacillus cytotoxicus (strain DSM 22905 / CIP 110041 / 391-98 / NVH 391-98)).